Reading from the N-terminus, the 706-residue chain is Amino-acid acetyltransferase, mitochondrial (706 aa).

2 disordered regions span residues 1-25 (MSSRVLASRAAQPLKRHPTVVGAGD) and 367-403 (NPANNSQGESVVTNPISDSNAVSESASTEPTSTPAKQ). The transit peptide at 1–35 (MSSRVLASRAAQPLKRHPTVVGAGDEAYPTPRRCF) directs the protein to the mitochondrion. Residues 367 to 388 (NPANNSQGESVVTNPISDSNAV) are compositionally biased toward polar residues. The span at 389–401 (SESASTEPTSTPA) shows a compositional bias: low complexity. Residues 527–696 (TRPNMNLDDP…YEAVCRSIQP (170 aa)) enclose the N-acetyltransferase domain.

It belongs to the acetyltransferase family.

It is found in the mitochondrion. The enzyme catalyses L-glutamate + acetyl-CoA = N-acetyl-L-glutamate + CoA + H(+). It participates in amino-acid biosynthesis; L-arginine biosynthesis; N(2)-acetyl-L-ornithine from L-glutamate: step 1/4. Functionally, N-acetylglutamate synthase involved in arginine biosynthesis. This chain is Amino-acid acetyltransferase, mitochondrial (arg2), found in Emericella nidulans (strain FGSC A4 / ATCC 38163 / CBS 112.46 / NRRL 194 / M139) (Aspergillus nidulans).